A 229-amino-acid chain; its full sequence is 2,3-bisphosphoglycerate-dependent phosphoglycerate mutase (229 aa).

Substrate contacts are provided by residues 7-14 (RHGQSEWN), 20-21 (TG), Arg59, 86-89 (ERHY), Lys97, 113-114 (RR), and 182-183 (GN). Residue His8 is the Tele-phosphohistidine intermediate of the active site. Glu86 (proton donor/acceptor) is an active-site residue.

This sequence belongs to the phosphoglycerate mutase family. BPG-dependent PGAM subfamily.

It catalyses the reaction (2R)-2-phosphoglycerate = (2R)-3-phosphoglycerate. Its pathway is carbohydrate degradation; glycolysis; pyruvate from D-glyceraldehyde 3-phosphate: step 3/5. Catalyzes the interconversion of 2-phosphoglycerate and 3-phosphoglycerate. This chain is 2,3-bisphosphoglycerate-dependent phosphoglycerate mutase, found in Listeria monocytogenes serovar 1/2a (strain ATCC BAA-679 / EGD-e).